Consider the following 255-residue polypeptide: 5-oxoprolinase subunit A (255 aa).

This sequence belongs to the LamB/PxpA family. As to quaternary structure, forms a complex composed of PxpA, PxpB and PxpC.

The enzyme catalyses 5-oxo-L-proline + ATP + 2 H2O = L-glutamate + ADP + phosphate + H(+). Its function is as follows. Catalyzes the cleavage of 5-oxoproline to form L-glutamate coupled to the hydrolysis of ATP to ADP and inorganic phosphate. The protein is 5-oxoprolinase subunit A of Campylobacter jejuni subsp. doylei (strain ATCC BAA-1458 / RM4099 / 269.97).